We begin with the raw amino-acid sequence, 231 residues long: ATP phosphoribosyltransferase (231 aa).

It belongs to the ATP phosphoribosyltransferase family. Short subfamily. As to quaternary structure, heteromultimer composed of HisG and HisZ subunits.

It localises to the cytoplasm. The enzyme catalyses 1-(5-phospho-beta-D-ribosyl)-ATP + diphosphate = 5-phospho-alpha-D-ribose 1-diphosphate + ATP. It participates in amino-acid biosynthesis; L-histidine biosynthesis; L-histidine from 5-phospho-alpha-D-ribose 1-diphosphate: step 1/9. Functionally, catalyzes the condensation of ATP and 5-phosphoribose 1-diphosphate to form N'-(5'-phosphoribosyl)-ATP (PR-ATP). Has a crucial role in the pathway because the rate of histidine biosynthesis seems to be controlled primarily by regulation of HisG enzymatic activity. This chain is ATP phosphoribosyltransferase, found in Brucella suis biovar 1 (strain 1330).